Consider the following 286-residue polypeptide: MSRFSVLSFLILAIFLGGSIVKGDVSFRLSGADPRSYGMFIKDLRNALPFREKVYNIPLLLPSVSGAGRYLLMHLFNYDGKTITVAVDVTNVYIMGYLADTTSYFFNEPAAELASQYVFRDARRKITLPYSGNYERLQIAAGKPREKIPIGLPALDSAISTLLHYDSTAAAGALLVLIQTTAEAARFKYIEQQIQERAYRDEVPSLATISLENSWSGLSKQIQLAQGNNGIFRTPIVLVDNKGNRVQITNVTSKVVTSNIQLLLNTRNIAEGDNGDVSTTHGFSSY.

The N-terminal stretch at 1–23 is a signal peptide; that stretch reads MSRFSVLSFLILAIFLGGSIVKG. Residue Glu-183 is part of the active site. N-linked (GlcNAc...) asparagine glycosylation occurs at Asn-250. A propeptide spans 270 to 286 (removed in mature form); that stretch reads AEGDNGDVSTTHGFSSY.

The protein belongs to the ribosome-inactivating protein family. Type 1 RIP subfamily.

It catalyses the reaction Endohydrolysis of the N-glycosidic bond at one specific adenosine on the 28S rRNA.. The sequence is that of Ribosome-inactivating protein momordin I from Momordica charantia (Bitter gourd).